Consider the following 193-residue polypeptide: Putative 3-methyladenine DNA glycosylase (193 aa).

This sequence belongs to the DNA glycosylase MPG family.

The chain is Putative 3-methyladenine DNA glycosylase from Francisella tularensis subsp. holarctica (strain FTNF002-00 / FTA).